A 278-amino-acid polypeptide reads, in one-letter code: Pantothenate synthetase (278 aa).

30–37 (MGGLHQGH) is a binding site for ATP. Catalysis depends on His-37, which acts as the Proton donor. Residue Gln-61 participates in (R)-pantoate binding. Beta-alanine is bound at residue Gln-61. Residue 146-149 (GQKD) participates in ATP binding. (R)-pantoate is bound at residue Gln-152. Residues Ile-175 and 183 to 186 (MSTR) contribute to the ATP site.

The protein belongs to the pantothenate synthetase family. In terms of assembly, homodimer.

It localises to the cytoplasm. The enzyme catalyses (R)-pantoate + beta-alanine + ATP = (R)-pantothenate + AMP + diphosphate + H(+). It functions in the pathway cofactor biosynthesis; (R)-pantothenate biosynthesis; (R)-pantothenate from (R)-pantoate and beta-alanine: step 1/1. Catalyzes the condensation of pantoate with beta-alanine in an ATP-dependent reaction via a pantoyl-adenylate intermediate. This is Pantothenate synthetase from Ruthia magnifica subsp. Calyptogena magnifica.